The sequence spans 397 residues: Kappa-carrageenase (397 aa).

The signal sequence occupies residues 1 to 25 (MKPISIVAFPIPAISMLLLSAVSQA). The GH16 domain occupies 26–299 (ASMQPPIAKP…YVRTWVKVGN (274 aa)). Residues C98 and C268 are joined by a disulfide bond. E163 acts as the Nucleophile in catalysis. Residue D165 is part of the active site. E168 (proton donor) is an active-site residue. Positions 316-387 (AVNSVQLSAA…TITVKTKNKG (72 aa)) constitute a BIG2 domain.

Belongs to the glycosyl hydrolase 16 family.

It localises to the periplasm. The enzyme catalyses Endohydrolysis of (1-&gt;4)-beta-D-linkages between D-galactose 4-sulfate and 3,6-anhydro-D-galactose in kappa-carrageenans.. In Pseudoalteromonas carrageenovora (Alteromonas carrageenovora), this protein is Kappa-carrageenase (cgkA).